The following is an 838-amino-acid chain: Phosphatidylethanolamine N-methyltransferase 1 (838 aa).

Topologically, residues 1–48 (MATEIITEKKEIVARTRSSGITFNPPVTHDMVRSLFDPTIKKSFLECC) are lumenal. The chain crosses the membrane as a helical span at residues 49-69 (ITLTILANFVLCYYLINWFGL). Residues 70 to 73 (SQAK) lie on the Cytoplasmic side of the membrane. Residues 74–94 (LIFLIQYVYWRLAYNLGIGII) traverse the membrane as a helical segment. Over 95–157 (LHYQSHYESL…ELNCWLLFRQ (63 aa)) the chain is Lumenal. Residues 158 to 178 (FVDLILMQDFTTYIIYVYLSL) traverse the membrane as a helical segment. Residues 179 to 184 (PTDVSS) lie on the Cytoplasmic side of the membrane. A helical transmembrane segment spans residues 185-205 (LINWKSLIGIAMILFNIWVKI). The Lumenal segment spans residues 206 to 236 (DAHRVVKDYAWYWGDFFFLQDAELTFDGVFN). A helical membrane pass occupies residues 237 to 257 (ISPHPMYSIGYLGYYGLSLIC). The Cytoplasmic segment spans residues 258–261 (GDYR). Residues 262 to 282 (VLLVSVGGHFLQFLFLKYVES) traverse the membrane as a helical segment. Residues 283–328 (PHIERTYGSDSPSNSTQHQIDDLIAKENYDYSRPLINTGILFENFQ) lie on the Lumenal side of the membrane. The helical transmembrane segment at 329 to 349 (FLRFSDYFTVSTILVLFSWFF) threads the bilayer. Over 350–356 (TSKPSNN) the chain is Cytoplasmic. A helical membrane pass occupies residues 357–377 (FLFVLTLLTKLTTWLLTSWIL). At 378–403 (FQQSNRKWFTRLFLKNGYTQIYSYQQ) the chain is on the lumenal side. A helical membrane pass occupies residues 404 to 424 (WQFLYNYSLIVTNTLLFLHTL). Topologically, residues 425–435 (SELYSIQSSDG) are cytoplasmic. A helical membrane pass occupies residues 436-456 (LNNSHVIFGLLLCAIQIWCNV). At 457 to 517 (ETRDAISDFG…VLMTNFSKTN (61 aa)) the chain is on the lumenal side. The chain crosses the membrane as a helical span at residues 518 to 538 (VTLAVLWTVTNLIFVKLIEEP). The Cytoplasmic portion of the chain corresponds to 539–838 (HVSKVYGNGT…DIKEVLDSLN (300 aa)).

Belongs to the class VI-like SAM-binding methyltransferase superfamily. CHO2 family.

It is found in the endoplasmic reticulum membrane. The catalysed reaction is a 1,2-diacyl-sn-glycero-3-phosphoethanolamine + S-adenosyl-L-methionine = a 1,2-diacyl-sn-glycero-3-phospho-N-methylethanolamine + S-adenosyl-L-homocysteine + H(+). Its pathway is phospholipid metabolism; phosphatidylcholine biosynthesis. Its function is as follows. Catalyzes the first step of the methylation pathway of phosphatidylcholine biosynthesis, the SAM-dependent methylation of phosphatidylethanolamine (PE) to phosphatidylmonomethylethanolamine (PMME). This is Phosphatidylethanolamine N-methyltransferase 1 (CHO2-1) from Vanderwaltozyma polyspora (strain ATCC 22028 / DSM 70294 / BCRC 21397 / CBS 2163 / NBRC 10782 / NRRL Y-8283 / UCD 57-17) (Kluyveromyces polysporus).